The primary structure comprises 468 residues: Acetyl-CoA decarbonylase/synthase complex subunit gamma (468 aa).

The 4Fe-4S domain maps to methionine 1–aspartate 60. [4Fe-4S] cluster contacts are provided by cysteine 18, cysteine 21, cysteine 26, and cysteine 43.

Heterodimer of delta and gamma chains. The ACDS complex is made up of alpha, epsilon, beta, gamma and delta chains with a probable stoichiometry of (alpha(2)epsilon(2))(4)-beta(8)-(gamma(1)delta(1))(8). The cofactor is corrinoid. [4Fe-4S] cluster is required as a cofactor.

It catalyses the reaction 5,6,7,8-tetrahydrosarcinapterin + methyl-Co(III)-[corrinoid Fe-S protein] = 5-methyltetrahydrosarcinapterin + Co(I)-[corrinoid Fe-S protein] + H(+). The protein operates within one-carbon metabolism; methanogenesis from acetate. Functionally, part of a complex that catalyzes the reversible cleavage of acetyl-CoA, allowing growth on acetate as sole source of carbon and energy. In Methanosarcina acetivorans (strain ATCC 35395 / DSM 2834 / JCM 12185 / C2A), this protein is Acetyl-CoA decarbonylase/synthase complex subunit gamma.